The following is a 1003-amino-acid chain: Anoctamin-2 (1003 aa).

The tract at residues 1-68 (MATPGPRDIP…PCGGESTRSS (68 aa)) is disordered. At 1-365 (MATPGPRDIP…FGEKIGLYFA (365 aa)) the chain is on the cytoplasmic side. Positions 10-21 (PLLPGSPRRLSP) are enriched in low complexity. Residues 366–386 (WLGLYTSFLIPSSVIGVIVFL) traverse the membrane as a helical segment. Residues 387–434 (YGCATIEEDIPSREMCDQQNAFTMCPLCDKSCDYWNLSSACGTAQASH) lie on the Extracellular side of the membrane. The N-linked (GlcNAc...) asparagine glycan is linked to N422. The helical transmembrane segment at 435–455 (LFDNPATVFFSIFMALWATMF) threads the bilayer. Over 456 to 538 (LENWKRLQMR…KDRFPGYLMN (83 aa)) the chain is Cytoplasmic. The helical transmembrane segment at 539–559 (FASILFMIALTFSIVFGVIVY) threads the bilayer. Over 560-582 (RITTAAALSLNKATRSNVRVTVT) the chain is Extracellular. Residues 583-603 (ATAVIINLVVILILDEIYGAV) form a helical membrane-spanning segment. Topologically, residues 604 to 623 (AKWLTKIEVPKTEQTFEERL) are cytoplasmic. The chain crosses the membrane as a helical span at residues 624–644 (ILKAFLLKFVNAYSPIFYVAF). Topologically, residues 645 to 748 (FKGRFVGRPG…YTGLTPEYME (104 aa)) are extracellular. A helical transmembrane segment spans residues 749 to 769 (MIIQFGFVTLFVASFPLAPVF). Over 770 to 801 (ALLNNVIEVRLDAKKFVTELRRPDAVRTKDIG) the chain is Cytoplasmic. A helical transmembrane segment spans residues 802 to 822 (IWFDILSGIGKFSVISNAFVI). The Extracellular segment spans residues 823 to 907 (AITSDFIPRL…QYWFILSARL (85 aa)). Residues N841, N849, and N856 are each glycosylated (N-linked (GlcNAc...) asparagine). Residues 908 to 928 (AFVIIFQNLVMFLSVLVDWMI) traverse the membrane as a helical segment. Residues 929–1003 (PDIPTDISDQ…MSSGSQHTNV (75 aa)) are Cytoplasmic-facing. The segment at 961-1003 (MDEPALRSPGGGDRSRSRAASSAPSGQSQLGSMMSSGSQHTNV) is disordered. Over residues 978–1003 (RAASSAPSGQSQLGSMMSSGSQHTNV) the composition is skewed to low complexity. The DLG4 binding (PDZ) motif lies at 1001-1003 (TNV).

Belongs to the anoctamin family. In terms of assembly, homodimer. Component of a presynaptic protein complex recruited to specialized plasma membrane domains of photoreceptors. Interacts with DLG4 by its C-terminal region. Retina, especially in the photoreceptor synaptic terminals.

It is found in the cell membrane. The enzyme catalyses chloride(in) = chloride(out). Its activity is regulated as follows. Channel activity is repressed by chloride inhibitors; strongly by niflumic acid (NFA), partially by flufenamic acid (FFA), and only slightly by meclofenamic acid (MFA), 5-Nitro-2-(3-phenylpropylamino)benzoic acid (NPPB), 4-acetamido-4'-isothiocyanato-stilben-2,2'-disulfonate (SITS), and 4,4'-diisothiocyanatostilbene-2,2'-disulfonic acid (DIDS). Calcium-activated chloride channel (CaCC) which may play a role in olfactory signal transduction. Odorant molecules bind to odor-sensing receptors (OSRs), leading to an increase in calcium entry that activates CaCC current which amplifies the depolarization of the OSR cells, ANO2 seems to be the underlying chloride channel involved in this process. May mediate light perception amplification in retina. The chain is Anoctamin-2 (ANO2) from Homo sapiens (Human).